A 607-amino-acid chain; its full sequence is UvrABC system protein C (607 aa).

Residues 14–93 (HKPGVYLMLD…IKKHKPRYNI (80 aa)) form the GIY-YIG domain. The UVR domain occupies 203–238 (RDLLAELKRQMLQASERLNFEQAGQFRDQIRALKTT).

This sequence belongs to the UvrC family. Interacts with UvrB in an incision complex.

The protein localises to the cytoplasm. In terms of biological role, the UvrABC repair system catalyzes the recognition and processing of DNA lesions. UvrC both incises the 5' and 3' sides of the lesion. The N-terminal half is responsible for the 3' incision and the C-terminal half is responsible for the 5' incision. This is UvrABC system protein C from Desulfotalea psychrophila (strain LSv54 / DSM 12343).